A 236-amino-acid chain; its full sequence is 2-C-methyl-D-erythritol 4-phosphate cytidylyltransferase (236 aa).

It belongs to the IspD/TarI cytidylyltransferase family. IspD subfamily. Homodimer.

It catalyses the reaction 2-C-methyl-D-erythritol 4-phosphate + CTP + H(+) = 4-CDP-2-C-methyl-D-erythritol + diphosphate. The protein operates within isoprenoid biosynthesis; isopentenyl diphosphate biosynthesis via DXP pathway; isopentenyl diphosphate from 1-deoxy-D-xylulose 5-phosphate: step 2/6. Functionally, catalyzes the formation of 4-diphosphocytidyl-2-C-methyl-D-erythritol from CTP and 2-C-methyl-D-erythritol 4-phosphate (MEP). This Shigella flexneri serotype 5b (strain 8401) protein is 2-C-methyl-D-erythritol 4-phosphate cytidylyltransferase.